The primary structure comprises 300 residues: ETS homologous factor (300 aa).

In terms of domain architecture, PNT spans 29–115; sequence STCNVSSGFF…SNLQHLKWNG (87 aa). The segment at 179 to 204 is disordered; the sequence is LPIAESPDTKKEQDHPTKPHTKKHNP. Over residues 185–195 the composition is skewed to basic and acidic residues; it reads PDTKKEQDHPT. Positions 207–289 form a DNA-binding region, ETS; it reads THLWEFIRDI…DGRRLVYKFG (83 aa).

Belongs to the ETS family.

It is found in the nucleus. Transcriptional activator that may play a role in regulating epithelial cell differentiation and proliferation. May act as a repressor for a specific subset of ETS/AP-1-responsive genes, and as a modulator of the nuclear response to mitogen-activated protein kinase signaling cascades. Binds to DNA sequences containing the consensus nucleotide core sequence GGAA. Involved in regulation of TNFRSF10B/DR5 expression through Ets-binding sequences on the TNFRSF10B/DR5 promoter. This chain is ETS homologous factor (EHF), found in Bos taurus (Bovine).